Consider the following 124-residue polypeptide: Small ribosomal subunit protein uS12 (124 aa).

The segment at 1 to 28 is disordered; sequence MPTIQQLIRSERSKAKKKTKSPALKQCP. Position 89 is a 3-methylthioaspartic acid (aspartate 89). The disordered stretch occupies residues 101–124; it reads TLDAQGVKDRKQGRSKYGTKKPKE. Basic residues predominate over residues 113–124; it reads GRSKYGTKKPKE.

It belongs to the universal ribosomal protein uS12 family. Part of the 30S ribosomal subunit. Contacts proteins S8 and S17. May interact with IF1 in the 30S initiation complex.

Its function is as follows. With S4 and S5 plays an important role in translational accuracy. Functionally, interacts with and stabilizes bases of the 16S rRNA that are involved in tRNA selection in the A site and with the mRNA backbone. Located at the interface of the 30S and 50S subunits, it traverses the body of the 30S subunit contacting proteins on the other side and probably holding the rRNA structure together. The combined cluster of proteins S8, S12 and S17 appears to hold together the shoulder and platform of the 30S subunit. This Crocosphaera subtropica (strain ATCC 51142 / BH68) (Cyanothece sp. (strain ATCC 51142)) protein is Small ribosomal subunit protein uS12.